Here is a 388-residue protein sequence, read N- to C-terminus: DNA replication and repair protein RecF (388 aa).

30–37 (GNNAQGKS) contributes to the ATP binding site.

Belongs to the RecF family.

The protein localises to the cytoplasm. Functionally, the RecF protein is involved in DNA metabolism; it is required for DNA replication and normal SOS inducibility. RecF binds preferentially to single-stranded, linear DNA. It also seems to bind ATP. The sequence is that of DNA replication and repair protein RecF from Picosynechococcus sp. (strain ATCC 27264 / PCC 7002 / PR-6) (Agmenellum quadruplicatum).